Reading from the N-terminus, the 67-residue chain is Small ribosomal subunit protein bS21 (67 aa).

It belongs to the bacterial ribosomal protein bS21 family.

This is Small ribosomal subunit protein bS21 from Rhodospirillum centenum (strain ATCC 51521 / SW).